Here is a 1396-residue protein sequence, read N- to C-terminus: MVDITDFFKKTNKADSSQAFNQVRINIASPEQIRSWSYGEVTKPETINYRTFKPEKDGLFCAKIFGPVKDYECLCGKYKRMKYRGIVCEKCGVEVTTSKVRRERMGHIELASPIAHIWFVRSLPSRISILLDMNLKDLERVIYFEAYIVMDPGLSPLHKGDLLTEEMLQQAQNEYGEDNFIVGIGAEAIRTLLAELDLKSLRNALQEEVNNVINSDFKRKKILRRLKLIEDFIGSGNKPEWMIVTVLPIIPPELRPLVMLDAGRFASSDLNELYRRLINRNNRLKYLKKEEDGVPGIVLRNEQRMVQLSADTLFDNGKRGKAVKNSNKRPFKSLSDMLKGKQGRFRQNLLGKRVDYSGRSVIVVGPELKLHQCGLPKQMALELFKPFVYAELERCGIATTIKAAKRIVELGTPDVWNALAKVIKHHPVLLNRAPTLHCLSIQAFEPVLIEDKAIQLHPLVCTAFNADFDGDQMAVHVPLSTEAQLEARVLMMSTNNILSPANGRPIIVPDKDIVLGLYYLTLSIDGEIGEGRLFGSMAEIHHALFNKVVSLHSKIKFRKHIINADGDKVMALVNTTPGRLMLGELLPDGDNISFDVVNKVMTKKGISAIVDMVYRYYGQKATVVFADKLMKLGFKYACISGISFGMDDMIVPETKSKHVNDTLLEVQEFERQYSEGLITSGEKYNKVIDAWSRYTDRVANDMMKGIAAGDQTSVGLTNQERLNSIFMMADSEARSSVTQIKQLIGSKGLIAKASGEIIDRPILSNFCEGLTVFECFIGIPGTRKGLADTAVKTKVSGHLSRKLSESAHGYFVKREDCGTTNGLIITAVVEGGVIVVTLAEQVLGRVAVSNVYCPITKVLILQQGEMIDEYKVELINTAGINSIKVRSVLTCELQEGVCAKCYGRDLSTGKLVAIGTAVGIVAAQSIGEPGTQLTMRTFHIGGAATRGVEASSFEAIVDGRVKIINPNFVVNSNNKSVIMSRSCEVILADNVGQEITRYKAQYGSILLVTDGQEVTKGTSLVAWDPYAMPIVTEKSGYVMFKDMIDGVSVKDIIDESTGIVNRVIIEPKQGRGEVVLRPRICLLDQNKQPLTLSNGLEAEYFLPVNSILSVEEGANVSAGDILARIPREFAGTKDITGGLPRVIELFEARKPKNHAVIAEIDGCVKFGKDYKSKRRLILQPNDECQEPIEYILPKGRHVTVNEGDVVKKGDMLIEGSPVLQDILKVMGVEALGLYIINEIQAVYRLQGVKIDNKHIEVIITRMLQKVEITDSGDSNFVIEEKVNKREVINTNKKLKVKGLREAQYRPILQGITKASLQTQSFISAASFQETTRVLTEAAIAGKVDKLEGLKENVIVGQTIPAGTGFYINEIKKIARQRDKEIIAAKDAELQENNTEA.

Zn(2+) contacts are provided by Cys-73, Cys-75, Cys-88, and Cys-91. Positions 467, 469, and 471 each coordinate Mg(2+). Cys-817, Cys-891, Cys-898, and Cys-901 together coordinate Zn(2+).

It belongs to the RNA polymerase beta' chain family. In terms of assembly, the RNAP catalytic core consists of 2 alpha, 1 beta, 1 beta' and 1 omega subunit. When a sigma factor is associated with the core the holoenzyme is formed, which can initiate transcription. The cofactor is Mg(2+). Requires Zn(2+) as cofactor.

It catalyses the reaction RNA(n) + a ribonucleoside 5'-triphosphate = RNA(n+1) + diphosphate. Functionally, DNA-dependent RNA polymerase catalyzes the transcription of DNA into RNA using the four ribonucleoside triphosphates as substrates. The protein is DNA-directed RNA polymerase subunit beta' of Orientia tsutsugamushi (strain Boryong) (Rickettsia tsutsugamushi).